Here is a 387-residue protein sequence, read N- to C-terminus: Formate-dependent phosphoribosylglycinamide formyltransferase (387 aa).

N(1)-(5-phospho-beta-D-ribosyl)glycinamide contacts are provided by residues 15 to 16 (EL) and Glu75. Residues Arg106, Lys147, 152–157 (SSGKGQ), 187–190 (EEFI), and Glu195 each bind ATP. One can recognise an ATP-grasp domain in the interval 111 to 301 (DLASNELNIR…EFELHLRAVL (191 aa)). Residues Glu260 and Glu272 each coordinate Mg(2+). Residues Asp279, Lys349, and 356 to 357 (RR) each bind N(1)-(5-phospho-beta-D-ribosyl)glycinamide.

Belongs to the PurK/PurT family. As to quaternary structure, homodimer.

It catalyses the reaction N(1)-(5-phospho-beta-D-ribosyl)glycinamide + formate + ATP = N(2)-formyl-N(1)-(5-phospho-beta-D-ribosyl)glycinamide + ADP + phosphate + H(+). The protein operates within purine metabolism; IMP biosynthesis via de novo pathway; N(2)-formyl-N(1)-(5-phospho-D-ribosyl)glycinamide from N(1)-(5-phospho-D-ribosyl)glycinamide (formate route): step 1/1. Functionally, involved in the de novo purine biosynthesis. Catalyzes the transfer of formate to 5-phospho-ribosyl-glycinamide (GAR), producing 5-phospho-ribosyl-N-formylglycinamide (FGAR). Formate is provided by PurU via hydrolysis of 10-formyl-tetrahydrofolate. The chain is Formate-dependent phosphoribosylglycinamide formyltransferase from Prochlorococcus marinus (strain NATL1A).